Consider the following 37-residue polypeptide: Potassium channel toxin alpha-KTx 3.9 (37 aa).

3 disulfides stabilise this stretch: Cys-7–Cys-27, Cys-13–Cys-32, and Cys-17–Cys-34. Residues 25-32 (GKCMNRKC) are interaction with Ca(2+)-activated K(+) channels.

Belongs to the short scorpion toxin superfamily. Potassium channel inhibitor family. Alpha-KTx 03 subfamily. In terms of tissue distribution, expressed by the venom gland.

It localises to the secreted. In terms of biological role, binds and inhibits potassium channels. Intracerebroventricular injection into mice induces paralyzing symptoms followed by death. Its binding affinity to rat brain synaptosomes is 5-fold lower than this of KTX 1. In Buthus occitanus tunetanus (Common European scorpion), this protein is Potassium channel toxin alpha-KTx 3.9 (KTX3).